Here is a 62-residue protein sequence, read N- to C-terminus: Conotoxin Gm5.2 (62 aa).

The N-terminal stretch at 1–22 (MRCLPVFVILLLLIASAPSVDA) is a signal peptide. Residues 23–49 (QPKTKDDVPLAPLHDNIRSTLQTLRKK) constitute a propeptide that is removed on maturation. Serine 60 carries the serine amide modification.

Belongs to the conotoxin T superfamily. Contains 2 disulfide bonds that can be either 'C1-C3, C2-C4' or 'C1-C4, C2-C3', since these disulfide connectivities have been observed for conotoxins with cysteine framework V (for examples, see AC P0DQQ7 and AC P81755). Expressed by the venom duct.

The protein localises to the secreted. The chain is Conotoxin Gm5.2 from Conus gloriamaris (Glory-of-the-Sea cone).